A 1075-amino-acid chain; its full sequence is DNA-directed RNA polymerase subunit beta (1075 aa).

The protein belongs to the RNA polymerase beta chain family. As to quaternary structure, in plastids the minimal PEP RNA polymerase catalytic core is composed of four subunits: alpha, beta, beta', and beta''. When a (nuclear-encoded) sigma factor is associated with the core the holoenzyme is formed, which can initiate transcription.

The protein localises to the plastid. The protein resides in the chloroplast. It carries out the reaction RNA(n) + a ribonucleoside 5'-triphosphate = RNA(n+1) + diphosphate. DNA-dependent RNA polymerase catalyzes the transcription of DNA into RNA using the four ribonucleoside triphosphates as substrates. This chain is DNA-directed RNA polymerase subunit beta, found in Pinus thunbergii (Japanese black pine).